The sequence spans 297 residues: ATP synthase F(1) complex subunit gamma, mitochondrial (297 aa).

A mitochondrion-targeting transit peptide spans 1-25 (MFSRAGVAGLSAWTLQPQWIQVRNM). Position 39 is an N6-acetyllysine (K39). Position 49 is an N6-succinyllysine (K49). At K55 the chain carries N6-acetyllysine. An N6-acetyllysine; alternate modification is found at K115. Position 115 is an N6-succinyllysine; alternate (K115). Residue S146 is modified to Phosphoserine. Residue K154 is modified to N6-acetyllysine; alternate. The residue at position 154 (K154) is an N6-succinyllysine; alternate. K197 carries the post-translational modification N6-acetyllysine. At K270 the chain carries N6-succinyllysine.

It belongs to the ATPase gamma chain family. In terms of assembly, component of the ATP synthase complex composed at least of ATP5F1A/subunit alpha, ATP5F1B/subunit beta, ATP5MC1/subunit c (homooctomer), MT-ATP6/subunit a, MT-ATP8/subunit 8, ATP5ME/subunit e, ATP5MF/subunit f, ATP5MG/subunit g, ATP5MK/subunit k, ATP5MJ/subunit j, ATP5F1C/subunit gamma, ATP5F1D/subunit delta, ATP5F1E/subunit epsilon, ATP5PF/subunit F6, ATP5PB/subunit b, ATP5PD/subunit d, ATP5PO/subunit OSCP. ATP synthase complex consists of a soluble F(1) head domain (subunits alpha(3) and beta(3)) - the catalytic core - and a membrane F(0) domain - the membrane proton channel (subunits c, a, 8, e, f, g, k and j). These two domains are linked by a central stalk (subunits gamma, delta, and epsilon) rotating inside the F1 region and a stationary peripheral stalk (subunits F6, b, d, and OSCP). Interacts with FLVCR2; this interaction occurs in the absence of heme and is disrupted upon heme binding.

Its subcellular location is the mitochondrion inner membrane. In terms of biological role, subunit gamma, of the mitochondrial membrane ATP synthase complex (F(1)F(0) ATP synthase or Complex V) that produces ATP from ADP in the presence of a proton gradient across the membrane which is generated by electron transport complexes of the respiratory chain. ATP synthase complex consist of a soluble F(1) head domain - the catalytic core - and a membrane F(1) domain - the membrane proton channel. These two domains are linked by a central stalk rotating inside the F(1) region and a stationary peripheral stalk. During catalysis, ATP synthesis in the catalytic domain of F(1) is coupled via a rotary mechanism of the central stalk subunits to proton translocation. In vivo, can only synthesize ATP although its ATP hydrolase activity can be activated artificially in vitro. With the central stalk subunit delta, is essential for the biogenesis of F(1) catalytic part of the ATP synthase complex namely in the formation of F1 assembly intermediate. This chain is ATP synthase F(1) complex subunit gamma, mitochondrial, found in Pongo abelii (Sumatran orangutan).